The chain runs to 111 residues: Rhodanese domain-containing protein CG4456 (111 aa).

The 99-residue stretch at 12–110 (NHPDVYLIDV…SWNEWAQKEG (99 aa)) folds into the Rhodanese domain.

In Drosophila melanogaster (Fruit fly), this protein is Rhodanese domain-containing protein CG4456.